We begin with the raw amino-acid sequence, 153 residues long: Peptide deformylase (153 aa).

Residues Cys-87 and His-129 each coordinate Fe cation. Glu-130 is an active-site residue. Fe cation is bound at residue His-133.

The protein belongs to the polypeptide deformylase family. It depends on Fe(2+) as a cofactor.

The enzyme catalyses N-terminal N-formyl-L-methionyl-[peptide] + H2O = N-terminal L-methionyl-[peptide] + formate. Its function is as follows. Removes the formyl group from the N-terminal Met of newly synthesized proteins. Requires at least a dipeptide for an efficient rate of reaction. N-terminal L-methionine is a prerequisite for activity but the enzyme has broad specificity at other positions. The polypeptide is Peptide deformylase (Dictyoglomus thermophilum (strain ATCC 35947 / DSM 3960 / H-6-12)).